Consider the following 177-residue polypeptide: MRLHSAITLRNLFTRKSLRIPQNLSITASPLLIGDVSGQIKPSSTSHYSKSSLSEASSSSSSSLIFQIPNNASFFLENQRRYSTGSSSGSPPDVNKVVDEINLKFAEAREEIEMAMDAKETVYFNEEAECARDAVAEVLEMFQGLLGKVTEKEKASLQRSMGLKIEQLKAELEQLNE.

Residues 98–118 (VDEINLKFAEAREEIEMAMDA) adopt a coiled-coil conformation.

Interacts with HAG1/GCN5. As to expression, expressed in flowers, leaves, stems and siliques.

It is found in the nucleus. Its function is as follows. Activates gene expression by recruiting HAG1/GCN5 and triggering subsequent histone H3 acetylation of target genes promoters. The chain is Embryogenesis-like protein from Arabidopsis thaliana (Mouse-ear cress).